The sequence spans 491 residues: NADH-quinone oxidoreductase subunit N (491 aa).

The next 14 helical transmembrane spans lie at 11-31, 38-58, 74-94, 106-126, 128-148, 163-183, 206-226, 243-263, 272-292, 301-321, 336-356, 379-399, 410-430, and 465-485; these read ATAE…TTFA, LAYG…YNTA, LLGD…LLYG, PEYY…VTSN, LLSM…LVAF, FVLG…LYGA, LLFG…VVPF, LIIA…LLVW, WQTM…LAAI, LAYS…SGVV, MFYA…IILL, FAAM…FIGF, VAAG…IGAF, and LAIA…TFVL.

The protein belongs to the complex I subunit 2 family. NDH-1 is composed of 14 different subunits. Subunits NuoA, H, J, K, L, M, N constitute the membrane sector of the complex.

The protein localises to the cell inner membrane. It catalyses the reaction a quinone + NADH + 5 H(+)(in) = a quinol + NAD(+) + 4 H(+)(out). In terms of biological role, NDH-1 shuttles electrons from NADH, via FMN and iron-sulfur (Fe-S) centers, to quinones in the respiratory chain. The immediate electron acceptor for the enzyme in this species is believed to be ubiquinone. Couples the redox reaction to proton translocation (for every two electrons transferred, four hydrogen ions are translocated across the cytoplasmic membrane), and thus conserves the redox energy in a proton gradient. The sequence is that of NADH-quinone oxidoreductase subunit N from Azoarcus sp. (strain BH72).